A 493-amino-acid chain; its full sequence is Galactose-1-phosphate uridylyltransferase (493 aa).

It belongs to the galactose-1-phosphate uridylyltransferase type 2 family.

It localises to the cytoplasm. The enzyme catalyses alpha-D-galactose 1-phosphate + UDP-alpha-D-glucose = alpha-D-glucose 1-phosphate + UDP-alpha-D-galactose. It participates in carbohydrate metabolism; galactose metabolism. The protein is Galactose-1-phosphate uridylyltransferase of Streptococcus pneumoniae serotype 19F (strain G54).